The following is a 470-amino-acid chain: Cysteine--tRNA ligase (470 aa).

Cys46 is a Zn(2+) binding site. Positions 48 to 58 match the 'HIGH' region motif; the sequence is PTVYDLAHIGN. Residues Cys230, His255, and Glu259 each contribute to the Zn(2+) site. The 'KMSKS' region signature appears at 288-292; it reads KMSKS. Lys291 contacts ATP.

It belongs to the class-I aminoacyl-tRNA synthetase family. In terms of assembly, monomer. It depends on Zn(2+) as a cofactor.

It localises to the cytoplasm. The enzyme catalyses tRNA(Cys) + L-cysteine + ATP = L-cysteinyl-tRNA(Cys) + AMP + diphosphate. This chain is Cysteine--tRNA ligase, found in Granulibacter bethesdensis (strain ATCC BAA-1260 / CGDNIH1).